Reading from the N-terminus, the 239-residue chain is Probable transcriptional regulatory protein LMOf2365_0385 (239 aa).

It belongs to the TACO1 family. YeeN subfamily.

The protein resides in the cytoplasm. The sequence is that of Probable transcriptional regulatory protein LMOf2365_0385 from Listeria monocytogenes serotype 4b (strain F2365).